A 509-amino-acid chain; its full sequence is Zinc finger CCCH-type with G patch domain-containing protein (509 aa).

The C3H1-type zinc finger occupies 155–178 (PCNYYLEGECRFDEIRCRYSHGAL). The interval 253–277 (EEDGLTSEDSSSSPHDESSDEIDSD) is disordered. One can recognise a G-patch domain in the interval 310–356 (TRGIGSKLMEKMGYIHGTGLGSEGRGIVTPVSAQILPQGRSLDACME). The tract at residues 409-430 (GGESRHQGDQAAKKAKTNDLQQ) is disordered. Over residues 411-420 (ESRHQGDQAA) the composition is skewed to basic and acidic residues.

The protein localises to the nucleus. Transcription repressor. The polypeptide is Zinc finger CCCH-type with G patch domain-containing protein (Drosophila persimilis (Fruit fly)).